Here is a 217-residue protein sequence, read N- to C-terminus: Cytidylate kinase (217 aa).

ATP is bound at residue 10-18; that stretch reads GPAGAGKST.

This sequence belongs to the cytidylate kinase family. Type 1 subfamily.

The protein localises to the cytoplasm. It carries out the reaction CMP + ATP = CDP + ADP. It catalyses the reaction dCMP + ATP = dCDP + ADP. This Clostridium botulinum (strain Langeland / NCTC 10281 / Type F) protein is Cytidylate kinase.